We begin with the raw amino-acid sequence, 774 residues long: 1,4-alpha-glucan branching enzyme GlgB 1 (774 aa).

The segment at 1 to 66 is disordered; it reads MTPRPSSSGP…AEVAVSPAPD (66 aa). The segment covering 29–40 has biased composition (basic residues); it reads KPAKAAKKKAPR. Positions 41–55 are enriched in low complexity; the sequence is RTTASANASATTSVS. Catalysis depends on Asp457, which acts as the Nucleophile. Glu510 acts as the Proton donor in catalysis. Residues 748–774 form a disordered region; sequence YGGGDVVNPDPVKPEPQGGTAARRASG.

This sequence belongs to the glycosyl hydrolase 13 family. GlgB subfamily. Monomer.

The catalysed reaction is Transfers a segment of a (1-&gt;4)-alpha-D-glucan chain to a primary hydroxy group in a similar glucan chain.. The protein operates within glycan biosynthesis; glycogen biosynthesis. Its function is as follows. Catalyzes the formation of the alpha-1,6-glucosidic linkages in glycogen by scission of a 1,4-alpha-linked oligosaccharide from growing alpha-1,4-glucan chains and the subsequent attachment of the oligosaccharide to the alpha-1,6 position. The polypeptide is 1,4-alpha-glucan branching enzyme GlgB 1 (glgB1) (Streptomyces coelicolor (strain ATCC BAA-471 / A3(2) / M145)).